The chain runs to 515 residues: Maturase K (515 aa).

Belongs to the intron maturase 2 family. MatK subfamily.

The protein localises to the plastid. It localises to the chloroplast. Usually encoded in the trnK tRNA gene intron. Probably assists in splicing its own and other chloroplast group II introns. The polypeptide is Maturase K (Zingiber officinale (Ginger)).